A 347-amino-acid chain; its full sequence is Homeobox protein knotted-1-like 9 (347 aa).

Low complexity predominate over residues 1-17 (MESFASLAGGGSSSTTA). Disordered regions lie at residues 1 to 36 (MESF…PPPL), 122 to 145 (QQLD…DVPD), and 179 to 206 (DSNC…DPSD). The segment covering 22–36 (LIPPENPDRISPPPL) has biased composition (pro residues). Residues 188-203 (SEEEQDTSCPEAEEID) show a composition bias toward acidic residues. The region spanning 208–228 (QLKHQLLMKYGGSLGDLRQAF) is the ELK domain. A DNA-binding region (homeobox; TALE-type) is located at residues 229–293 (SKRTKKGKLP…NQRKRHWKPT (65 aa)).

The protein belongs to the TALE/KNOX homeobox family.

It is found in the nucleus. This Oryza sativa subsp. japonica (Rice) protein is Homeobox protein knotted-1-like 9.